The sequence spans 168 residues: ATP synthase F(1) complex subunit delta, mitochondrial (168 aa).

Residues 1–22 constitute a mitochondrion transit peptide; the sequence is MLPSALLRRPGLGRLVRQVRLY. Residues Lys-136 and Lys-165 each carry the N6-acetyllysine; alternate modification. Residues Lys-136 and Lys-165 each carry the N6-succinyllysine; alternate modification.

The protein belongs to the ATPase epsilon chain family. Component of the ATP synthase complex composed at least of ATP5F1A/subunit alpha, ATP5F1B/subunit beta, ATP5MC1/subunit c (homooctomer), MT-ATP6/subunit a, MT-ATP8/subunit 8, ATP5ME/subunit e, ATP5MF/subunit f, ATP5MG/subunit g, ATP5MK/subunit k, ATP5MJ/subunit j, ATP5F1C/subunit gamma, ATP5F1D/subunit delta, ATP5F1E/subunit epsilon, ATP5PF/subunit F6, ATP5PB/subunit b, ATP5PD/subunit d, ATP5PO/subunit OSCP. ATP synthase complex consists of a soluble F(1) head domain (subunits alpha(3) and beta(3)) - the catalytic core - and a membrane F(0) domain - the membrane proton channel (subunits c, a, 8, e, f, g, k and j). These two domains are linked by a central stalk (subunits gamma, delta, and epsilon) rotating inside the F1 region and a stationary peripheral stalk (subunits F6, b, d, and OSCP). Component of a complex composed at least by ATPIF1, ATP5F1A, ATP5F1B, ATP5F1C AND ATP5F1E.

The protein localises to the mitochondrion. It localises to the mitochondrion inner membrane. In terms of biological role, subunit delta, of the mitochondrial membrane ATP synthase complex (F(1)F(0) ATP synthase or Complex V) that produces ATP from ADP in the presence of a proton gradient across the membrane which is generated by electron transport complexes of the respiratory chain. ATP synthase complex consist of a soluble F(1) head domain - the catalytic core - and a membrane F(1) domain - the membrane proton channel. These two domains are linked by a central stalk rotating inside the F(1) region and a stationary peripheral stalk. During catalysis, ATP synthesis in the catalytic domain of F(1) is coupled via a rotary mechanism of the central stalk subunits to proton translocation. In vivo, can only synthesize ATP although its ATP hydrolase activity can be activated artificially in vitro. With the central stalk subunit gamma, is essential for the biogenesis of F(1) catalytic part of the ATP synthase complex namely in the formation of F1 assembly intermediate. This Bos taurus (Bovine) protein is ATP synthase F(1) complex subunit delta, mitochondrial.